The primary structure comprises 940 residues: Isoleucine--tRNA ligase (940 aa).

The 'HIGH' region motif lies at 58-68 (PYANGSIHIGH). E564 contributes to the L-isoleucyl-5'-AMP binding site. A 'KMSKS' region motif is present at residues 605 to 609 (KMSKS). ATP is bound at residue K608. 4 residues coordinate Zn(2+): C903, C906, C923, and C926.

Belongs to the class-I aminoacyl-tRNA synthetase family. IleS type 1 subfamily. In terms of assembly, monomer. The cofactor is Zn(2+).

The protein localises to the cytoplasm. It carries out the reaction tRNA(Ile) + L-isoleucine + ATP = L-isoleucyl-tRNA(Ile) + AMP + diphosphate. Functionally, catalyzes the attachment of isoleucine to tRNA(Ile). As IleRS can inadvertently accommodate and process structurally similar amino acids such as valine, to avoid such errors it has two additional distinct tRNA(Ile)-dependent editing activities. One activity is designated as 'pretransfer' editing and involves the hydrolysis of activated Val-AMP. The other activity is designated 'posttransfer' editing and involves deacylation of mischarged Val-tRNA(Ile). This Shewanella sp. (strain MR-7) protein is Isoleucine--tRNA ligase.